Here is a 474-residue protein sequence, read N- to C-terminus: ATP synthase subunit beta (474 aa).

151-158 (GGAGVGKT) provides a ligand contact to ATP.

Belongs to the ATPase alpha/beta chains family. As to quaternary structure, F-type ATPases have 2 components, CF(1) - the catalytic core - and CF(0) - the membrane proton channel. CF(1) has five subunits: alpha(3), beta(3), gamma(1), delta(1), epsilon(1). CF(0) has four main subunits: a(1), b(1), b'(1) and c(9-12).

Its subcellular location is the cell inner membrane. The enzyme catalyses ATP + H2O + 4 H(+)(in) = ADP + phosphate + 5 H(+)(out). Produces ATP from ADP in the presence of a proton gradient across the membrane. The catalytic sites are hosted primarily by the beta subunits. The sequence is that of ATP synthase subunit beta from Roseobacter denitrificans (strain ATCC 33942 / OCh 114) (Erythrobacter sp. (strain OCh 114)).